The sequence spans 392 residues: Sulfate adenylyltransferase (392 aa).

This sequence belongs to the sulfate adenylyltransferase family.

The catalysed reaction is sulfate + ATP + H(+) = adenosine 5'-phosphosulfate + diphosphate. It participates in sulfur metabolism; hydrogen sulfide biosynthesis; sulfite from sulfate: step 1/3. This is Sulfate adenylyltransferase from Nostoc punctiforme (strain ATCC 29133 / PCC 73102).